The chain runs to 617 residues: MKQSKMLIPTLREMPSDAQVISHALMVRAGYVRQVSAGIYAYLPLANRTIEKFKTIMRQEFEKIGAVEMLAPALLTADLWRESGRYETYGEDLYKLKNRDQSDFILGPTHEETFTTLVRDAVKSYKQLPLNLYQIQSKYRDEKRPRNGLLRTREFIMKDGYSFHKDYEDLDVTYEDYRKAYEAIFTRAGLDFKGIIGDGGAMGGKDSQEFMAVTPNRTDLNRWLVLDKTIPSIDDIPEDVLEEIKAELSAWLVSGEDTIAYSTESSYAANLEMATNEYKPSTKAATFEEVTKVETPNCKSIDEVAGFLSIDKNQTIKTLLFIADEQPVVALLVGNDQVNDVKLKNYLAADFLEPASEEQAKEIFGAGFGSLGPVNLPESVKIIADRKVQDLANAVSGANQDGYHFTGVNPERDFTAEYVDIREVKEGEISPDGKGTLKFSRGIEIGHIFKLGTRYSDSMGANILDENGRSNPIVMGCYGIGVSRILSAVIEQHARLFVNKTPKGAYRFAWGINFPEELAPFDVHLITVNVKDQESQDLTEKIEADLMLKGYEVLTDDRNERVGSKFSDSDLIGLPIRVTVGKKASEGIVEVKIKASGDTIEVHADNLIETLEILTKK.

This sequence belongs to the class-II aminoacyl-tRNA synthetase family. ProS type 1 subfamily. In terms of assembly, homodimer.

It is found in the cytoplasm. It catalyses the reaction tRNA(Pro) + L-proline + ATP = L-prolyl-tRNA(Pro) + AMP + diphosphate. In terms of biological role, catalyzes the attachment of proline to tRNA(Pro) in a two-step reaction: proline is first activated by ATP to form Pro-AMP and then transferred to the acceptor end of tRNA(Pro). As ProRS can inadvertently accommodate and process non-cognate amino acids such as alanine and cysteine, to avoid such errors it has two additional distinct editing activities against alanine. One activity is designated as 'pretransfer' editing and involves the tRNA(Pro)-independent hydrolysis of activated Ala-AMP. The other activity is designated 'posttransfer' editing and involves deacylation of mischarged Ala-tRNA(Pro). The misacylated Cys-tRNA(Pro) is not edited by ProRS. The protein is Proline--tRNA ligase of Streptococcus agalactiae serotype Ia (strain ATCC 27591 / A909 / CDC SS700).